The sequence spans 954 residues: Translation initiation factor IF-2 (954 aa).

Over residues 56–75 (KAAAPAAPKAPAPAAESRPA) the composition is skewed to low complexity. The interval 56–355 (KAAAPAAPKA…GVSVPRGDGN (300 aa)) is disordered. Pro residues predominate over residues 76-87 (APAPGPAAPKAP). Composition is skewed to low complexity over residues 88–125 (APKV…KPGA) and 138–151 (PRQG…SAPR). The segment covering 241 to 254 (PGAPRPGGPRPTPG) has biased composition (pro residues). A compositionally biased stretch (gly residues) spans 269 to 322 (GRPGGGGRGPGRPGAPGTGGPGGGGGAPAGGGFGKGGRGRGGTQGAFGKGGAGR). Positions 323–332 (GKQRKSKRAK) are enriched in basic residues. One can recognise a tr-type G domain in the interval 447-618 (PRAPVVTVMG…AVLLTADAAL (172 aa)). Positions 456 to 463 (GHVDHGKT) are G1. A GTP-binding site is contributed by 456–463 (GHVDHGKT). The segment at 481–485 (GITQH) is G2. The G3 stretch occupies residues 506 to 509 (DTPG). GTP is bound by residues 506–510 (DTPGH) and 560–563 (NKID). Residues 560–563 (NKID) form a G4 region. Positions 596–598 (SAR) are G5.

Belongs to the TRAFAC class translation factor GTPase superfamily. Classic translation factor GTPase family. IF-2 subfamily.

Its subcellular location is the cytoplasm. Its function is as follows. One of the essential components for the initiation of protein synthesis. Protects formylmethionyl-tRNA from spontaneous hydrolysis and promotes its binding to the 30S ribosomal subunits. Also involved in the hydrolysis of GTP during the formation of the 70S ribosomal complex. The chain is Translation initiation factor IF-2 from Pseudarthrobacter chlorophenolicus (strain ATCC 700700 / DSM 12829 / CIP 107037 / JCM 12360 / KCTC 9906 / NCIMB 13794 / A6) (Arthrobacter chlorophenolicus).